The sequence spans 215 residues: Adenylate kinase (215 aa).

An ATP-binding site is contributed by 10–15 (GAGKGT). The NMP stretch occupies residues 30 to 59 (STGDIFRKNISENTPLGMEARSYMDKGLLV). Residues T31, R36, 57–59 (LLV), 85–88 (GFPR), and Q92 each bind AMP. The LID stretch occupies residues 126-163 (GRRVCTSCGGSFHIKFNPPTIDGKCNLCGSDIVQRKDD). Residue R127 participates in ATP binding. Zn(2+) contacts are provided by C130 and C133. 136-137 (SF) contributes to the ATP binding site. Residues C150 and C153 each coordinate Zn(2+). 2 residues coordinate AMP: R160 and R171. K199 contacts ATP.

This sequence belongs to the adenylate kinase family. In terms of assembly, monomer.

The protein localises to the cytoplasm. The catalysed reaction is AMP + ATP = 2 ADP. It participates in purine metabolism; AMP biosynthesis via salvage pathway; AMP from ADP: step 1/1. Functionally, catalyzes the reversible transfer of the terminal phosphate group between ATP and AMP. Plays an important role in cellular energy homeostasis and in adenine nucleotide metabolism. This is Adenylate kinase from Clostridium botulinum (strain Alaska E43 / Type E3).